The sequence spans 389 residues: Arrestin-C (389 aa).

This sequence belongs to the arrestin family. In terms of tissue distribution, retina and pineal gland.

May play a role in an as yet undefined retina-specific signal transduction. Could bind to photoactivated-phosphorylated red/green opsins. The protein is Arrestin-C (arr3) of Aquarana catesbeiana (American bullfrog).